Consider the following 172-residue polypeptide: Ribosome maturation factor RimM (172 aa).

The PRC barrel domain maps to 94 to 167; sequence ENEFYLFQLK…FIKVELLPGM (74 aa).

This sequence belongs to the RimM family. In terms of assembly, binds ribosomal protein uS19.

Its subcellular location is the cytoplasm. Functionally, an accessory protein needed during the final step in the assembly of 30S ribosomal subunit, possibly for assembly of the head region. Essential for efficient processing of 16S rRNA. May be needed both before and after RbfA during the maturation of 16S rRNA. It has affinity for free ribosomal 30S subunits but not for 70S ribosomes. The protein is Ribosome maturation factor RimM of Carboxydothermus hydrogenoformans (strain ATCC BAA-161 / DSM 6008 / Z-2901).